A 419-amino-acid polypeptide reads, in one-letter code: D-mannonate dehydratase (419 aa).

Asparagine 54 and histidine 139 together coordinate substrate. Tyrosine 176 functions as the Proton donor/acceptor in the catalytic mechanism. A Mg(2+)-binding site is contributed by aspartate 227. The active-site Proton donor/acceptor is histidine 229. Mg(2+) contacts are provided by glutamate 253 and glutamate 279. Residues glutamate 279, arginine 300, histidine 329, aspartate 333, and glutamate 356 each coordinate substrate.

Belongs to the mandelate racemase/muconate lactonizing enzyme family. GalD subfamily. Mg(2+) serves as cofactor.

The enzyme catalyses D-mannonate = 2-dehydro-3-deoxy-D-gluconate + H2O. It functions in the pathway carbohydrate metabolism; pentose and glucuronate interconversion. Catalyzes the dehydration of D-mannonate. Has no detectable activity with a panel of 70 other acid sugars (in vitro). This chain is D-mannonate dehydratase, found in Xanthomonas oryzae pv. oryzicola (strain BLS256).